The chain runs to 106 residues: Replication restart protein PriB (106 aa).

The region spanning 4 to 103 is the SSB domain; that stretch reads TNRLVLSGTV…LHAEQIEFID (100 aa).

Belongs to the PriB family. Homodimer. Interacts with PriA and DnaT. Component of the replication restart primosome. Primosome assembly occurs via a 'hand-off' mechanism. PriA binds to replication forks, subsequently PriB then DnaT bind; DnaT then displaces ssDNA to generate the helicase loading substrate.

In terms of biological role, involved in the restart of stalled replication forks, which reloads the replicative helicase on sites other than the origin of replication; the PriA-PriB pathway is the major replication restart pathway. During primosome assembly it facilitates complex formation between PriA and DnaT on DNA; stabilizes PriA on DNA. Stimulates the DNA unwinding activity of PriA helicase. This Yersinia enterocolitica serotype O:8 / biotype 1B (strain NCTC 13174 / 8081) protein is Replication restart protein PriB.